A 355-amino-acid polypeptide reads, in one-letter code: Peptide chain release factor 1 (355 aa).

N5-methylglutamine is present on glutamine 233. The segment at 280-310 (ERRKKEQKRANNRRGQVGSGDRSERIRTYNF) is disordered.

The protein belongs to the prokaryotic/mitochondrial release factor family. Post-translationally, methylated by PrmC. Methylation increases the termination efficiency of RF1.

It is found in the cytoplasm. Its function is as follows. Peptide chain release factor 1 directs the termination of translation in response to the peptide chain termination codons UAG and UAA. The protein is Peptide chain release factor 1 of Rickettsia canadensis (strain McKiel).